The primary structure comprises 553 residues: Transcriptional regulator HilA (553 aa).

The ompR/PhoB-type DNA-binding region spans 11-107 (NKKFVFDDFI…LYGQGYRFNR (97 aa)). Asp62 bears the 4-aspartylphosphate mark. The TPR repeat unit spans residues 372-405 (ADIKYYYGWNLFMAGQLEEALQTINECLKLDPTR).

Functionally, the main transcriptional regulator of the Salmonella pathogenicity island 1 (SPI1) gene expression. Activates the expression of invasion genes by a direct action at their promoters and also indirectly by increasing the level of invF. Also binds upstream of prgH and directly activates the expression of prgHIJK operon. The polypeptide is Transcriptional regulator HilA (hilA) (Salmonella paratyphi A (strain ATCC 9150 / SARB42)).